The following is a 1135-amino-acid chain: Potassium channel subfamily T member 2 (1135 aa).

Over 1 to 63 (MVDLESEVPP…KNQRSSLRIR (63 aa)) the chain is Cytoplasmic. Residues 64–84 (LFNFSLKLLSCLLYIIRVLLE) traverse the membrane as a helical segment. Residues 85 to 101 (KPSQGSEWSHIFWVNRS) lie on the Extracellular side of the membrane. A helical membrane pass occupies residues 102–122 (LPLWGLQVSVALISLFETILL). Residues 123–137 (GYLSYKGNIWEQILR) are Cytoplasmic-facing. Residues 138-158 (IPFILEIINAVPFIISIFWPT) form a helical membrane-spanning segment. The Extracellular portion of the chain corresponds to 159–164 (LRNLFV). Residues 165–185 (PVFLNCWLAKHALENMINDLH) traverse the membrane as a helical segment. Over 186–198 (RAIQRTQSAMFNQ) the chain is Cytoplasmic. Residues 199–219 (VLILISTLLCLIFTCICGIQH) form a helical membrane-spanning segment. The Extracellular portion of the chain corresponds to 220–228 (LERIGKKLN). The pore-forming intramembrane region spans 229-249 (LFDSLYFCIVTFSTVGFGDVT). The Extracellular portion of the chain corresponds to 250-256 (PETWSSK). The helical transmembrane segment at 257–277 (LFVVAMICVALVVLPIQFEQL) threads the bilayer. Topologically, residues 278-1135 (AYLWMERQKS…VQDSREETQL (858 aa)) are cytoplasmic. 2 RCK N-terminal domains span residues 299–435 (EKHV…DHVV) and 718–858 (NKLI…CYSL). Disordered regions lie at residues 982–1036 (DTKD…AEKI) and 1111–1135 (PNSE…ETQL). Over residues 1010-1030 (LRRKSMQWARRLSRKGPKHSG) the composition is skewed to basic residues. The segment covering 1111-1122 (PNSEPSRKNSIC) has biased composition (polar residues).

Belongs to the potassium channel family. Calcium-activated (TC 1.A.1.3) subfamily. KCa4.2/KCNT2 sub-subfamily. Homotetramer. Forms heteromeric channels with KCNT1. These heterodimer channels differ from the homomers in their unitary conductance, kinetic behavior, subcellular localization, and response to activation of protein kinase C. Post-translationally, phosphorylated by protein kinase C. Phosphorylation of the C-terminal domain inhibits channel activity. Within the dorsal root ganglia (DRGs), exclusively expressed in small-sized and medium-sized calcitonin gene-related peptide (CGRP)-containing DRG neurons.

The protein localises to the cell membrane. The catalysed reaction is K(+)(in) = K(+)(out). With respect to regulation, are normally in a closed state unless activated by an increase in intracellular Na(+) and Cl(-). Inhibited upon stimulation of G-protein coupled receptors, such as CHRM1 and GRM1. There is conflicting data about the effect of ATP on KNCT2 channels activity. Intracellular ATP was initially report to inhibit the channel activity. However, others studies conclude that KNCT2 channels are not inhibited by intracellular ATP. In terms of biological role, sodium-activated and chloride-activated potassium channel. Produces rapidly activating outward rectifier K(+) currents. Contributes to regulate neuronal excitability. This Mus musculus (Mouse) protein is Potassium channel subfamily T member 2 (Kcnt2).